Here is a 190-residue protein sequence, read N- to C-terminus: Threonylcarbamoyl-AMP synthase (190 aa).

Residues 7-190 enclose the YrdC-like domain; sequence TGSIAAAVDL…ALTGELFRQG (184 aa).

The protein belongs to the SUA5 family. TsaC subfamily.

It localises to the cytoplasm. The catalysed reaction is L-threonine + hydrogencarbonate + ATP = L-threonylcarbamoyladenylate + diphosphate + H2O. Functionally, required for the formation of a threonylcarbamoyl group on adenosine at position 37 (t(6)A37) in tRNAs that read codons beginning with adenine. Catalyzes the conversion of L-threonine, HCO(3)(-)/CO(2) and ATP to give threonylcarbamoyl-AMP (TC-AMP) as the acyladenylate intermediate, with the release of diphosphate. The chain is Threonylcarbamoyl-AMP synthase from Salmonella arizonae (strain ATCC BAA-731 / CDC346-86 / RSK2980).